We begin with the raw amino-acid sequence, 346 residues long: MNKYTASVVGGSGFTGGELLRLLTQHPYFEVVQATSRSKTHKTIGNVHPNLRSVDLRFTDPSELESVDILFAATPHGVSMQQIESFTAAADTVVDLSADFRLNSAEQYDEWYDGHACPEYLEDAEYALPEINRSNLVGASLIASGGCNATATILGLKPLFDADILTGDEQVVVDVKVGSSEGGAGGGDASSHPERSGVVRPYAPTGHRHEAEIEQFLGLSVSFTAHAVEMTRGASATCHVFPSEPVSNSDLWGAYHDVYAEEPFMRTVAGGGGVYRYPEPKSVAGSNYAEVGFERDPENHRLVIFSAIDNMMKGSAGQAVHAANIALGIDETTGLEFTGLHPVGAP.

12–15 contributes to the NADP(+) binding site; it reads SGFT. Cysteine 147 is an active-site residue. The segment at 178 to 198 is disordered; that stretch reads GSSEGGAGGGDASSHPERSGV. NADP(+) is bound at residue asparagine 310.

It belongs to the NAGSA dehydrogenase family. Type 1 subfamily. LysY sub-subfamily.

It is found in the cytoplasm. It catalyses the reaction [amino-group carrier protein]-C-terminal-N-(1-carboxy-5-oxopentan-1-yl)-L-glutamine + phosphate + NADP(+) = [amino-group carrier protein]-C-terminal-N-(1-carboxy-5-phosphooxy-5-oxopentan-1-yl)-L-glutamine + NADPH + H(+). It carries out the reaction [amino-group carrier protein]-C-terminal-gamma-(L-glutamyl-5-semialdehyde)-L-glutamate + phosphate + NADP(+) = [amino-group carrier protein]-C-terminal-gamma-(5-phospho-L-glutamyl)-L-glutamate + NADPH + H(+). The protein operates within amino-acid biosynthesis; L-lysine biosynthesis via AAA pathway; L-lysine from L-alpha-aminoadipate (Thermus route): step 3/5. Its pathway is amino-acid biosynthesis; L-arginine biosynthesis. Functionally, involved in both the arginine and lysine biosynthetic pathways. In Haloquadratum walsbyi (strain DSM 16790 / HBSQ001), this protein is Putative [LysW]-L-2-aminoadipate/[LysW]-L-glutamate phosphate reductase.